Consider the following 362-residue polypeptide: Dihydroorotate dehydrogenase (quinone) (362 aa).

FMN is bound by residues alanine 62–lysine 66 and threonine 86. Lysine 66 serves as a coordination point for substrate. Asparagine 111–phenylalanine 115 is a binding site for substrate. Positions 139 and 170 each coordinate FMN. Asparagine 170 is a binding site for substrate. The active-site Nucleophile is the serine 173. Asparagine 175 provides a ligand contact to substrate. 2 residues coordinate FMN: lysine 215 and serine 243. Position 244–245 (asparagine 244–threonine 245) interacts with substrate. FMN is bound by residues glycine 266, glycine 295, and tyrosine 316 to serine 317.

This sequence belongs to the dihydroorotate dehydrogenase family. Type 2 subfamily. Monomer. FMN serves as cofactor.

The protein localises to the cell membrane. It catalyses the reaction (S)-dihydroorotate + a quinone = orotate + a quinol. Its pathway is pyrimidine metabolism; UMP biosynthesis via de novo pathway; orotate from (S)-dihydroorotate (quinone route): step 1/1. Catalyzes the conversion of dihydroorotate to orotate with quinone as electron acceptor. In Rhizobium rhizogenes (strain K84 / ATCC BAA-868) (Agrobacterium radiobacter), this protein is Dihydroorotate dehydrogenase (quinone).